A 148-amino-acid chain; its full sequence is Ubiquitin-conjugating enzyme E2 8 (148 aa).

The 147-residue stretch at 1-147 (MASKRILKEL…ARNWTQKYAM (147 aa)) folds into the UBC core domain. Cys-85 (glycyl thioester intermediate) is an active-site residue.

It belongs to the ubiquitin-conjugating enzyme family. As to quaternary structure, interacts with CIP8, CHIP, NLA and XERICO. As to expression, highest expression in young stems, old leaves. Lowest levels in floral buds, anthers and young leaves.

It carries out the reaction S-ubiquitinyl-[E1 ubiquitin-activating enzyme]-L-cysteine + [E2 ubiquitin-conjugating enzyme]-L-cysteine = [E1 ubiquitin-activating enzyme]-L-cysteine + S-ubiquitinyl-[E2 ubiquitin-conjugating enzyme]-L-cysteine.. It participates in protein modification; protein ubiquitination. In terms of biological role, accepts the ubiquitin from the E1 complex and catalyzes its covalent attachment to other proteins. Mediates the selective degradation of short-lived and abnormal proteins. The protein is Ubiquitin-conjugating enzyme E2 8 (UBC8) of Arabidopsis thaliana (Mouse-ear cress).